A 201-amino-acid chain; its full sequence is Elongation factor Ts (201 aa).

The tract at residues 81–84 is involved in Mg(2+) ion dislocation from EF-Tu; sequence TDFV.

This sequence belongs to the EF-Ts family.

It is found in the cytoplasm. Functionally, associates with the EF-Tu.GDP complex and induces the exchange of GDP to GTP. It remains bound to the aminoacyl-tRNA.EF-Tu.GTP complex up to the GTP hydrolysis stage on the ribosome. The protein is Elongation factor Ts of Syntrophus aciditrophicus (strain SB).